Reading from the N-terminus, the 276-residue chain is MAIRSYRILTPDTRNRSVSGFDGRVQLDPQKKLTSGQHHCGKGRNGRGIITARHRGGGHKRLYRQIDFRRNKEHISGEIVTIEYDPNRSAYICKVHYKNGDKMYILHPRGVMIGDTILSGPKAPISIGNALPLTNMPLGTAIHNIEITLGKGGQLARAAGAVAELIAKEDRSATLRLPSGEVRLISENCSATIGQVGNITANNRSFGKAGAKRWLGKRSEVRGVAMNPVDHPHGGGEGRTPIGRKKPVTPWGYSALGKKSRKRNRYSDASILRRRE.

The interval 225-276 is disordered; sequence AMNPVDHPHGGGEGRTPIGRKKPVTPWGYSALGKKSRKRNRYSDASILRRRE.

Belongs to the universal ribosomal protein uL2 family. Part of the 50S ribosomal subunit.

The protein resides in the plastid. Its subcellular location is the chloroplast. The polypeptide is Large ribosomal subunit protein uL2c (rpl2) (Pinus thunbergii (Japanese black pine)).